Here is a 792-residue protein sequence, read N- to C-terminus: Phenylalanine--tRNA ligase beta subunit (792 aa).

A tRNA-binding domain is found at 39–147 (GEALDLIVVA…DDAPIGTPLA (109 aa)). The 76-residue stretch at 400–475 (PAPASILLRR…RIRGYEHLPT (76 aa)) folds into the B5 domain. Mg(2+) contacts are provided by D453, D459, E462, and E463. Residues 698–791 (SRFPFVRRDL…IQQRHDVRIR (94 aa)) form the FDX-ACB domain.

This sequence belongs to the phenylalanyl-tRNA synthetase beta subunit family. Type 1 subfamily. Tetramer of two alpha and two beta subunits. Mg(2+) serves as cofactor.

Its subcellular location is the cytoplasm. It carries out the reaction tRNA(Phe) + L-phenylalanine + ATP = L-phenylalanyl-tRNA(Phe) + AMP + diphosphate + H(+). In Xylella fastidiosa (strain 9a5c), this protein is Phenylalanine--tRNA ligase beta subunit (pheT).